The following is a 388-amino-acid chain: Succinate--CoA ligase [ADP-forming] subunit beta (388 aa).

The ATP-grasp domain occupies 9–245; the sequence is KELLAGYGLP…KSQENERELK (237 aa). ATP-binding positions include Lys-46, 53 to 55, Glu-100, Tyr-103, and Glu-108; that span reads GRG. 2 residues coordinate Mg(2+): Asn-200 and Asp-214. Substrate-binding positions include Asn-265 and 322–324; that span reads GIV.

Belongs to the succinate/malate CoA ligase beta subunit family. As to quaternary structure, heterotetramer of two alpha and two beta subunits. Requires Mg(2+) as cofactor.

The catalysed reaction is succinate + ATP + CoA = succinyl-CoA + ADP + phosphate. The enzyme catalyses GTP + succinate + CoA = succinyl-CoA + GDP + phosphate. Its pathway is carbohydrate metabolism; tricarboxylic acid cycle; succinate from succinyl-CoA (ligase route): step 1/1. Its function is as follows. Succinyl-CoA synthetase functions in the citric acid cycle (TCA), coupling the hydrolysis of succinyl-CoA to the synthesis of either ATP or GTP and thus represents the only step of substrate-level phosphorylation in the TCA. The beta subunit provides nucleotide specificity of the enzyme and binds the substrate succinate, while the binding sites for coenzyme A and phosphate are found in the alpha subunit. This chain is Succinate--CoA ligase [ADP-forming] subunit beta, found in Neisseria meningitidis serogroup C / serotype 2a (strain ATCC 700532 / DSM 15464 / FAM18).